The chain runs to 895 residues: MLFWVLLSSFCVFCFSSPDGFLSLSCGGSSYTAAYNISWVSDNDYIETGNTTTVTYAEGNSTSSVPIRLFPDPQGRQCYKLPVRKDLSSVLIRATFVYRNYDSQNSPPAFHVSLGRRITSTVDLRTNDPWIEELVWPVNNDSLLLCLLAVKGRGIPVISSLEVRPLPLGSYKYSLEGSPDIILRRSYRINSGYTNGTIRYPSDPFDRIWDPDQSYSPFHASWSFNGLTKLNSFNITENPPASVLKTARILARKESLSYTLSLHTPGDYYIILYFAGILSLSPSFSVTINDEVKQSDYTVTSSEAGTLYFTQKGISKLNITLRKIKFNPQVSALEVYEILQIPPEASSTTVSALKVIEQFTGQDLGWQDDPCTPLPWNHIECEGNRVTSLFLSKINLRSISPTFGDLLDLKTLDLHNTSLTGAIQNVGSLKDLQKLNLSFNQLESFGSELEDLVNLEVLDLQNNSLQGSVPETLGKLKKLRLLNLENNNLVGPLPQSLNITGLEVRITGNPCLSFSSISCNNVSSTIDTPQVTIPINKKQRKQNRIAILLGVSGGALFATFLVFVFMSIFTRRQRNKERDITRAQLKMQNWNASRIFSHKEIKSATRNFKEVIGRGSFGAVYRGKLPDGKQVAVKVRFDRTQLGADSFINEVHLLSQIRHQNLVSFEGFCYEPKRQILVYEYLSGGSLADHLYGPRSKRHSLNWVSRLKVAVDAAKGLDYLHNGSEPRIIHRDVKSSNILLDKDMNAKVSDFGLSKQFTKADASHITTVVKGTAGYLDPEYYSTLQLTEKSDVYSFGVVLLELICGREPLSHSGSPDSFNLVLWARPNLQAGAFEIVDDILKETFDPASMKKAASIAIRCVGRDASGRPSIAEVLTKLKEAYSLQLSYLAASAHTD.

The signal sequence occupies residues 1–16 (MLFWVLLSSFCVFCFS). Residues 17 to 544 (SPDGFLSLSC…INKKQRKQNR (528 aa)) lie on the Extracellular side of the membrane. N-linked (GlcNAc...) asparagine glycans are attached at residues asparagine 36, asparagine 50, asparagine 60, asparagine 140, asparagine 195, asparagine 234, and asparagine 318. LRR repeat units follow at residues 385–407 (RVTSLFLSKINLRSISPTFGDLL), 408–430 (DLKTLDLHNTSLTGAIQNVGSLK), 431–453 (DLQKLNLSFNQLESFGSELEDLV), 454–477 (NLEVLDLQNNSLQGSVPETLGKLK), 478–500 (KLRLLNLENNNLVGPLPQSLNIT), and 511–532 (CLSFSSISCNNVSSTIDTPQVT). 5 N-linked (GlcNAc...) asparagine glycosylation sites follow: asparagine 416, asparagine 436, asparagine 462, asparagine 498, and asparagine 521. The chain crosses the membrane as a helical span at residues 545-565 (IAILLGVSGGALFATFLVFVF). Residues 566 to 895 (MSIFTRRQRN…SYLAASAHTD (330 aa)) lie on the Cytoplasmic side of the membrane. Positions 606–888 (RNFKEVIGRG…EAYSLQLSYL (283 aa)) constitute a Protein kinase domain. Residues 612–620 (IGRGSFGAV) and lysine 634 contribute to the ATP site. Tyrosine 679 carries the phosphotyrosine modification. Aspartate 732 acts as the Proton acceptor in catalysis. The residue at position 736 (serine 736) is a Phosphoserine. Residues threonine 767 and threonine 772 each carry the phosphothreonine modification. The residue at position 780 (tyrosine 780) is a Phosphotyrosine.

The protein belongs to the protein kinase superfamily. Ser/Thr protein kinase family.

The protein localises to the membrane. It catalyses the reaction L-seryl-[protein] + ATP = O-phospho-L-seryl-[protein] + ADP + H(+). The catalysed reaction is L-threonyl-[protein] + ATP = O-phospho-L-threonyl-[protein] + ADP + H(+). In Arabidopsis thaliana (Mouse-ear cress), this protein is Probable LRR receptor-like serine/threonine-protein kinase At5g48740.